We begin with the raw amino-acid sequence, 521 residues long: Vascular endothelial zinc finger 1 (521 aa).

The C2H2-type 1 zinc finger occupies 74-96 (FVCTYCSKAFRDSYHLRRHESCH). Residues 140–155 (TTSSSGTNPSSSASTT) show a composition bias toward low complexity. A disordered region spans residues 140-167 (TTSSSGTNPSSSASTTAMPVTQSVKKPS). 5 consecutive C2H2-type zinc fingers follow at residues 174–196 (HACEMCGKAFRDVYHLNRHKLSH), 202–224 (FECPICNQRFKRKDRMTYHVRSH), 232–255 (YTCSVCGKGFSRPDHLSCHVKHVH), 261–283 (FKCQTCTAAFATKDRLRTHMVRH), and 287–308 (VSCNICGKLLSAAYITSHLKTH). An N6-acetyllysine modification is found at Lys-362. A run of 4 repeats spans residues 394-400 (PVTLTTP), 445-451 (PVTITSP), 457-463 (PLTLTTP), and 479-485 (PVTITSP). Positions 394 to 485 (PVTLTTPFSI…IAHPVTITSP (92 aa)) are 4 X 7 AA repeats of P-[LV]-T-[IL]-T-[ST]-P.

This sequence belongs to the krueppel C2H2-type zinc-finger protein family. As to quaternary structure, interacts with ARHGAP22. As to expression, ubiquitously expressed. Highest levels in skeletal muscle and kidney.

It is found in the nucleus. In terms of biological role, possible transcription factor. Specifically binds to the CT/GC-rich region of the interleukin-3 promoter and mediates tax transactivation of IL-3. This Homo sapiens (Human) protein is Vascular endothelial zinc finger 1 (VEZF1).